The following is a 179-amino-acid chain: Large ribosomal subunit protein uL5 (179 aa).

The protein belongs to the universal ribosomal protein uL5 family. In terms of assembly, part of the 50S ribosomal subunit; part of the 5S rRNA/L5/L18/L25 subcomplex. Contacts the 5S rRNA and the P site tRNA. Forms a bridge to the 30S subunit in the 70S ribosome.

This is one of the proteins that bind and probably mediate the attachment of the 5S RNA into the large ribosomal subunit, where it forms part of the central protuberance. In the 70S ribosome it contacts protein S13 of the 30S subunit (bridge B1b), connecting the 2 subunits; this bridge is implicated in subunit movement. Contacts the P site tRNA; the 5S rRNA and some of its associated proteins might help stabilize positioning of ribosome-bound tRNAs. This is Large ribosomal subunit protein uL5 from Nitrosomonas europaea (strain ATCC 19718 / CIP 103999 / KCTC 2705 / NBRC 14298).